A 345-amino-acid polypeptide reads, in one-letter code: GTPase Obg (345 aa).

Residues 1-159 (MHFLDQAKIF…MWVWLRLKLL (159 aa)) enclose the Obg domain. The segment at 121 to 142 (GDGGRGNASYKTSTNRAPRQHG) is disordered. Residues 160–327 (ADCGLVGLPN…VLDKIIEILG (168 aa)) form the OBG-type G domain. GTP contacts are provided by residues 166 to 173 (GLPNAGKS), 191 to 195 (FTTIR), 212 to 215 (DIPG), 279 to 282 (NKID), and 308 to 310 (SGA). 2 residues coordinate Mg(2+): serine 173 and threonine 193.

The protein belongs to the TRAFAC class OBG-HflX-like GTPase superfamily. OBG GTPase family. As to quaternary structure, monomer. The cofactor is Mg(2+).

The protein resides in the cytoplasm. An essential GTPase which binds GTP, GDP and possibly (p)ppGpp with moderate affinity, with high nucleotide exchange rates and a fairly low GTP hydrolysis rate. Plays a role in control of the cell cycle, stress response, ribosome biogenesis and in those bacteria that undergo differentiation, in morphogenesis control. This chain is GTPase Obg, found in Rhizorhabdus wittichii (strain DSM 6014 / CCUG 31198 / JCM 15750 / NBRC 105917 / EY 4224 / RW1) (Sphingomonas wittichii).